The sequence spans 694 residues: Follicle-stimulating hormone receptor (694 aa).

Positions 1 to 17 are cleaved as a signal peptide; that stretch reads MALLLVSLLAFLSLGSG. 2 disulfide bridges follow: cysteine 18–cysteine 25 and cysteine 23–cysteine 32. The region spanning 18–46 is the LRRNT domain; that stretch reads CHHRVCHCSNRVFLCQESKVTEIPSDLPR. Over 18 to 365 the chain is Extracellular; the sequence is CHHRVCHCSN…EDIMGYDILR (348 aa). LRR repeat units follow at residues 49-72, 73-97, 98-118, 119-143, 144-169, 170-192, 193-216, 217-240, and 241-259; these read LELRFVLTKLRVIPKGAFSGFGDL, EKIEISQNDVLEVIEANVFSNLPKL, HEIRIEKANNLLYIDHDAFQN, LPNLQYLLISNTGIKHLPAVHKIQS, LQKVLLDIQDNINIHTVERNSFMGLS, FESTILRLSKNGIQEIHNCAFNG, TQLDELNLSYNNNLEELPNDVFQG, ASGPVILDISGTRIHSLPNYGLEN, and LKKLRARSTYNLKKLPSLE. 2 N-linked (GlcNAc...) asparagine glycosylation sites follow: asparagine 191 and asparagine 199. N-linked (GlcNAc...) asparagine glycosylation is present at asparagine 268. 4 cysteine pairs are disulfide-bonded: cysteine 275-cysteine 345, cysteine 276-cysteine 292, cysteine 276-cysteine 355, and cysteine 292-cysteine 337. Asparagine 293 carries an N-linked (GlcNAc...) asparagine glycan. Tyrosine 334 bears the Sulfotyrosine mark. A helical membrane pass occupies residues 366 to 386; sequence VLIWFISILAITGNIIVLVIL. Residues 387–397 lie on the Cytoplasmic side of the membrane; sequence ITSQYKLTVPR. Residues 398 to 420 form a helical membrane-spanning segment; sequence FLMCNLAFADLCIGIYLLLIASV. Over 421–442 the chain is Extracellular; the sequence is DIHTKSQYHNYAIDWQTGAGCD. Cysteine 441 and cysteine 516 are disulfide-bonded. The helical transmembrane segment at 443–464 threads the bilayer; the sequence is AAGFFTVFASELSVYTLTAITL. The Cytoplasmic segment spans residues 465 to 484; the sequence is ERWHTITHAMQLECKVQLRH. The chain crosses the membrane as a helical span at residues 485-507; that stretch reads AASVMLVGWIFAFAVALLPIFGI. Topologically, residues 508–527 are extracellular; it reads STYMKVSICLPMDIDSPLSQ. Residues 528–549 traverse the membrane as a helical segment; the sequence is LYVMSLLVLNVLAFVVICGCYI. Topologically, residues 550-572 are cytoplasmic; sequence HIYLTVRNPNIVSSSSDTKIAKR. A helical membrane pass occupies residues 573–596; the sequence is MAILIFTDFLCMAPISFFAISASL. Topologically, residues 597 to 607 are extracellular; it reads KVPLITVSKSK. Residues 608-629 form a helical membrane-spanning segment; the sequence is ILLVLFYPINSCANPFLYAIFT. The Cytoplasmic segment spans residues 630–694; it reads KNFRRDFFIL…LVPLSHLAQN (65 aa).

Belongs to the G-protein coupled receptor 1 family. FSH/LSH/TSH subfamily. Homotrimer. Functions as a homotrimer binding the FSH hormone heterodimer composed of CGA and FSHB. Interacts with ARRB2. Interacts with APPL2; interaction is independent of follicle stimulating hormone stimulation. In terms of processing, N-glycosylated; indirectly required for FSH-binding, possibly via a conformational change that allows high affinity binding of hormone. Sulfated.

It is found in the cell membrane. In terms of biological role, g protein-coupled receptor for follitropin, the follicle-stimulating hormone. Through cAMP production activates the downstream PI3K-AKT and ERK1/ERK2 signaling pathways. In Equus caballus (Horse), this protein is Follicle-stimulating hormone receptor (FSHR).